The sequence spans 506 residues: Maturase K (506 aa).

It belongs to the intron maturase 2 family. MatK subfamily.

It is found in the plastid. Its subcellular location is the chloroplast. Usually encoded in the trnK tRNA gene intron. Probably assists in splicing its own and other chloroplast group II introns. In Medicago truncatula (Barrel medic), this protein is Maturase K.